Here is a 375-residue protein sequence, read N- to C-terminus: tRNA(Met) cytidine acetate ligase (375 aa).

ATP contacts are provided by residues 7–20, G101, N151, and R176; that span reads VVEYNPFHNGHRYH.

The protein belongs to the TmcAL family.

Its subcellular location is the cytoplasm. The catalysed reaction is cytidine(34) in elongator tRNA(Met) + acetate + ATP = N(4)-acetylcytidine(34) in elongator tRNA(Met) + AMP + diphosphate. Catalyzes the formation of N(4)-acetylcytidine (ac(4)C) at the wobble position of elongator tRNA(Met), using acetate and ATP as substrates. First activates an acetate ion to form acetyladenylate (Ac-AMP) and then transfers the acetyl group to tRNA to form ac(4)C34. This is tRNA(Met) cytidine acetate ligase from Limosilactobacillus fermentum (strain NBRC 3956 / LMG 18251) (Lactobacillus fermentum).